The sequence spans 417 residues: NADH-quinone oxidoreductase subunit D (417 aa).

It belongs to the complex I 49 kDa subunit family. NDH-1 is composed of 14 different subunits. Subunits NuoB, C, D, E, F, and G constitute the peripheral sector of the complex.

Its subcellular location is the cell inner membrane. It carries out the reaction a quinone + NADH + 5 H(+)(in) = a quinol + NAD(+) + 4 H(+)(out). NDH-1 shuttles electrons from NADH, via FMN and iron-sulfur (Fe-S) centers, to quinones in the respiratory chain. The immediate electron acceptor for the enzyme in this species is believed to be ubiquinone. Couples the redox reaction to proton translocation (for every two electrons transferred, four hydrogen ions are translocated across the cytoplasmic membrane), and thus conserves the redox energy in a proton gradient. This Albidiferax ferrireducens (strain ATCC BAA-621 / DSM 15236 / T118) (Rhodoferax ferrireducens) protein is NADH-quinone oxidoreductase subunit D.